The following is a 258-amino-acid chain: Phosphate import ATP-binding protein PstB (258 aa).

Positions 5 to 247 (LDLKGVNIYY…EKIFSNPTEK (243 aa)) constitute an ABC transporter domain. Position 37–44 (37–44 (GASGCGKT)) interacts with ATP.

Belongs to the ABC transporter superfamily. Phosphate importer (TC 3.A.1.7) family. As to quaternary structure, the complex is composed of two ATP-binding proteins (PstB), two transmembrane proteins (PstC and PstA) and a solute-binding protein (PstS).

The protein localises to the cell membrane. The catalysed reaction is phosphate(out) + ATP + H2O = ADP + 2 phosphate(in) + H(+). In terms of biological role, part of the ABC transporter complex PstSACB involved in phosphate import. Responsible for energy coupling to the transport system. In Mycobacterium leprae (strain TN), this protein is Phosphate import ATP-binding protein PstB.